Reading from the N-terminus, the 590-residue chain is Arginine--tRNA ligase (590 aa).

The 'HIGH' region motif lies at 138–148 (ANPTGPLHIGH).

Belongs to the class-I aminoacyl-tRNA synthetase family. Monomer.

The protein localises to the cytoplasm. It carries out the reaction tRNA(Arg) + L-arginine + ATP = L-arginyl-tRNA(Arg) + AMP + diphosphate. The chain is Arginine--tRNA ligase from Orientia tsutsugamushi (strain Ikeda) (Rickettsia tsutsugamushi).